The following is a 137-amino-acid chain: Small ribosomal subunit protein uS12 (137 aa).

Asp-89 is modified (3-methylthioaspartic acid). The tract at residues 101–137 is disordered; that stretch reads SLDTSGVADRKQSRSKYGAKQPKAGAPAAPVKGKGKK. A compositionally biased stretch (low complexity) spans 116–137; it reads KYGAKQPKAGAPAAPVKGKGKK.

It belongs to the universal ribosomal protein uS12 family. Part of the 30S ribosomal subunit. Contacts proteins S8 and S17. May interact with IF1 in the 30S initiation complex.

With S4 and S5 plays an important role in translational accuracy. In terms of biological role, interacts with and stabilizes bases of the 16S rRNA that are involved in tRNA selection in the A site and with the mRNA backbone. Located at the interface of the 30S and 50S subunits, it traverses the body of the 30S subunit contacting proteins on the other side and probably holding the rRNA structure together. The combined cluster of proteins S8, S12 and S17 appears to hold together the shoulder and platform of the 30S subunit. This chain is Small ribosomal subunit protein uS12, found in Chlorobium chlorochromatii (strain CaD3).